Here is a 483-residue protein sequence, read N- to C-terminus: UDP-N-acetylmuramyl-tripeptide synthetase (483 aa).

Residue Ser-43 coordinates UDP-N-acetyl-alpha-D-muramoyl-L-alanyl-D-glutamate. 116–122 (GTKGKTT) is an ATP binding site. UDP-N-acetyl-alpha-D-muramoyl-L-alanyl-D-glutamate contacts are provided by residues 160 to 161 (TT), Ser-187, and Arg-195. Lys-229 is modified (N6-carboxylysine).

It belongs to the MurCDEF family. MurE subfamily. Carboxylation is probably crucial for Mg(2+) binding and, consequently, for the gamma-phosphate positioning of ATP.

It is found in the cytoplasm. It participates in cell wall biogenesis; peptidoglycan biosynthesis. In terms of biological role, catalyzes the addition of an amino acid to the nucleotide precursor UDP-N-acetylmuramoyl-L-alanyl-D-glutamate (UMAG) in the biosynthesis of bacterial cell-wall peptidoglycan. The chain is UDP-N-acetylmuramyl-tripeptide synthetase from Lactococcus lactis subsp. cremoris (strain MG1363).